The following is a 72-amino-acid chain: DNA-directed RNA polymerase subunit omega (72 aa).

It belongs to the RNA polymerase subunit omega family. As to quaternary structure, the RNAP catalytic core consists of 2 alpha, 1 beta, 1 beta' and 1 omega subunit. When a sigma factor is associated with the core the holoenzyme is formed, which can initiate transcription.

It carries out the reaction RNA(n) + a ribonucleoside 5'-triphosphate = RNA(n+1) + diphosphate. Promotes RNA polymerase assembly. Latches the N- and C-terminal regions of the beta' subunit thereby facilitating its interaction with the beta and alpha subunits. The sequence is that of DNA-directed RNA polymerase subunit omega from Clostridium acetobutylicum (strain ATCC 824 / DSM 792 / JCM 1419 / IAM 19013 / LMG 5710 / NBRC 13948 / NRRL B-527 / VKM B-1787 / 2291 / W).